The chain runs to 334 residues: Protein CapI (334 aa).

A substrate-binding site is contributed by S126. Residue Y151 is the Proton acceptor of the active site.

This sequence belongs to the NAD(P)-dependent epimerase/dehydratase family.

Its pathway is capsule biogenesis; capsule polysaccharide biosynthesis. Functionally, required for the biosynthesis of type 1 capsular polysaccharide. This Staphylococcus aureus protein is Protein CapI (capI).